Consider the following 476-residue polypeptide: 3-isopropylmalate dehydratase large subunit (476 aa).

Positions 353, 413, and 416 each coordinate [4Fe-4S] cluster.

It belongs to the aconitase/IPM isomerase family. LeuC type 1 subfamily. In terms of assembly, heterodimer of LeuC and LeuD. [4Fe-4S] cluster is required as a cofactor.

It carries out the reaction (2R,3S)-3-isopropylmalate = (2S)-2-isopropylmalate. The protein operates within amino-acid biosynthesis; L-leucine biosynthesis; L-leucine from 3-methyl-2-oxobutanoate: step 2/4. Catalyzes the isomerization between 2-isopropylmalate and 3-isopropylmalate, via the formation of 2-isopropylmaleate. The chain is 3-isopropylmalate dehydratase large subunit from Photobacterium profundum (strain SS9).